A 585-amino-acid chain; its full sequence is 2-succinyl-5-enolpyruvyl-6-hydroxy-3-cyclohexene-1-carboxylate synthase (585 aa).

Belongs to the TPP enzyme family. MenD subfamily. In terms of assembly, homodimer. Mg(2+) serves as cofactor. It depends on Mn(2+) as a cofactor. Requires thiamine diphosphate as cofactor.

The enzyme catalyses isochorismate + 2-oxoglutarate + H(+) = 5-enolpyruvoyl-6-hydroxy-2-succinyl-cyclohex-3-ene-1-carboxylate + CO2. The protein operates within quinol/quinone metabolism; 1,4-dihydroxy-2-naphthoate biosynthesis; 1,4-dihydroxy-2-naphthoate from chorismate: step 2/7. It functions in the pathway cofactor biosynthesis; phylloquinone biosynthesis. Its function is as follows. Catalyzes the thiamine diphosphate-dependent decarboxylation of 2-oxoglutarate and the subsequent addition of the resulting succinic semialdehyde-thiamine pyrophosphate anion to isochorismate to yield 2-succinyl-5-enolpyruvyl-6-hydroxy-3-cyclohexene-1-carboxylate (SEPHCHC). The polypeptide is 2-succinyl-5-enolpyruvyl-6-hydroxy-3-cyclohexene-1-carboxylate synthase (Crocosphaera subtropica (strain ATCC 51142 / BH68) (Cyanothece sp. (strain ATCC 51142))).